The chain runs to 255 residues: U2 small nuclear ribonucleoprotein A' (255 aa).

4 LRR repeats span residues 20–41 (RDRE…GATL), 43–64 (QFDA…PLLR), 65–86 (RLKT…LDQA), and 89–110 (CLTE…DPLA). The region spanning 123–161 (NPVTNKKHYRLYVIYKVPQVRVLDFQKVKLKERQEAEKM) is the LRRCT domain. Lys172 carries the post-translational modification N6-acetyllysine; alternate. Lys172 participates in a covalent cross-link: Glycyl lysine isopeptide (Lys-Gly) (interchain with G-Cter in SUMO2); alternate. Residues 174–201 (IARRSKTFNPGAGLPTDKKKGGPSPGDV) form a disordered region. A phosphoserine mark is found at Ser178 and Ser197. A Glycyl lysine isopeptide (Lys-Gly) (interchain with G-Cter in SUMO2) cross-link involves residue Lys221. A disordered region spans residues 222–255 (GLLQSGQIPGRERRSGPTDDGEEEMEEDTVTNGS). Phosphoserine occurs at positions 236 and 255. The segment covering 240 to 255 (DDGEEEMEEDTVTNGS) has biased composition (acidic residues).

This sequence belongs to the U2 small nuclear ribonucleoprotein A family. Identified in the spliceosome B complex. Identified in the spliceosome C complex. Found in a pre-mRNA splicing complex with SFRS4, SFRS5, SNRNP70, SNRPA1, SRRM1 and SRRM2. Found in a pre-mRNA exonic splicing enhancer (ESE) complex with SNRNP70, SNRPA1, SRRM1 and TRA2B. Contributes to the binding of stem loop IV of U2 snRNA with SNRPB2.

The protein resides in the nucleus. Functionally, involved in pre-mRNA splicing as component of the spliceosome. Associated with sn-RNP U2, where it contributes to the binding of stem loop IV of U2 snRNA. This chain is U2 small nuclear ribonucleoprotein A' (SNRPA1), found in Homo sapiens (Human).